Here is a 231-residue protein sequence, read N- to C-terminus: ATP phosphoribosyltransferase (231 aa).

The protein belongs to the ATP phosphoribosyltransferase family. Short subfamily. Heteromultimer composed of HisG and HisZ subunits.

The protein localises to the cytoplasm. It carries out the reaction 1-(5-phospho-beta-D-ribosyl)-ATP + diphosphate = 5-phospho-alpha-D-ribose 1-diphosphate + ATP. It participates in amino-acid biosynthesis; L-histidine biosynthesis; L-histidine from 5-phospho-alpha-D-ribose 1-diphosphate: step 1/9. Its function is as follows. Catalyzes the condensation of ATP and 5-phosphoribose 1-diphosphate to form N'-(5'-phosphoribosyl)-ATP (PR-ATP). Has a crucial role in the pathway because the rate of histidine biosynthesis seems to be controlled primarily by regulation of HisG enzymatic activity. The sequence is that of ATP phosphoribosyltransferase from Psychrobacter arcticus (strain DSM 17307 / VKM B-2377 / 273-4).